The following is a 481-amino-acid chain: Glutamyl-tRNA(Gln) amidotransferase subunit A (481 aa).

Residues lysine 76 and serine 151 each act as charge relay system in the active site. Serine 175 serves as the catalytic Acyl-ester intermediate.

This sequence belongs to the amidase family. GatA subfamily. As to quaternary structure, heterotrimer of A, B and C subunits.

The catalysed reaction is L-glutamyl-tRNA(Gln) + L-glutamine + ATP + H2O = L-glutaminyl-tRNA(Gln) + L-glutamate + ADP + phosphate + H(+). Functionally, allows the formation of correctly charged Gln-tRNA(Gln) through the transamidation of misacylated Glu-tRNA(Gln) in organisms which lack glutaminyl-tRNA synthetase. The reaction takes place in the presence of glutamine and ATP through an activated gamma-phospho-Glu-tRNA(Gln). This Neisseria meningitidis serogroup A / serotype 4A (strain DSM 15465 / Z2491) protein is Glutamyl-tRNA(Gln) amidotransferase subunit A.